The following is a 129-amino-acid chain: Small ribosomal subunit protein uS11 (129 aa).

This sequence belongs to the universal ribosomal protein uS11 family. As to quaternary structure, part of the 30S ribosomal subunit. Interacts with proteins S7 and S18. Binds to IF-3.

Its function is as follows. Located on the platform of the 30S subunit, it bridges several disparate RNA helices of the 16S rRNA. Forms part of the Shine-Dalgarno cleft in the 70S ribosome. The chain is Small ribosomal subunit protein uS11 from Nitrosomonas europaea (strain ATCC 19718 / CIP 103999 / KCTC 2705 / NBRC 14298).